The sequence spans 294 residues: Large ribosomal subunit protein uL4m (294 aa).

The disordered stretch occupies residues 119–139; that stretch reads EVSGGGRKPWQQKGSGRARHG. An Omega-N-methylarginine modification is found at R147.

The protein belongs to the universal ribosomal protein uL4 family. As to quaternary structure, component of the mitochondrial ribosome large subunit (39S) which comprises a 16S rRNA and about 50 distinct proteins. Interacts with MIEF1 upstream open reading frame protein.

It localises to the mitochondrion. In Mus musculus (Mouse), this protein is Large ribosomal subunit protein uL4m (Mrpl4).